The primary structure comprises 151 residues: Small ribosomal subunit protein uS19 (151 aa).

It belongs to the universal ribosomal protein uS19 family.

This chain is Small ribosomal subunit protein uS19 (RPS15), found in Picea mariana (Black spruce).